A 250-amino-acid chain; its full sequence is Pyridoxine 5'-phosphate synthase (250 aa).

The 3-amino-2-oxopropyl phosphate site is built by asparagine 8 and arginine 19. Histidine 44 functions as the Proton acceptor in the catalytic mechanism. Arginine 46 and histidine 51 together coordinate 1-deoxy-D-xylulose 5-phosphate. Catalysis depends on glutamate 76, which acts as the Proton acceptor. Threonine 106 serves as a coordination point for 1-deoxy-D-xylulose 5-phosphate. Histidine 200 acts as the Proton donor in catalysis. 3-amino-2-oxopropyl phosphate is bound by residues aspartate 201 and glycine 223–histidine 224.

It belongs to the PNP synthase family. Homooctamer; tetramer of dimers.

The protein localises to the cytoplasm. The catalysed reaction is 3-amino-2-oxopropyl phosphate + 1-deoxy-D-xylulose 5-phosphate = pyridoxine 5'-phosphate + phosphate + 2 H2O + H(+). It functions in the pathway cofactor biosynthesis; pyridoxine 5'-phosphate biosynthesis; pyridoxine 5'-phosphate from D-erythrose 4-phosphate: step 5/5. In terms of biological role, catalyzes the complicated ring closure reaction between the two acyclic compounds 1-deoxy-D-xylulose-5-phosphate (DXP) and 3-amino-2-oxopropyl phosphate (1-amino-acetone-3-phosphate or AAP) to form pyridoxine 5'-phosphate (PNP) and inorganic phosphate. The chain is Pyridoxine 5'-phosphate synthase from Rhizobium meliloti (strain 1021) (Ensifer meliloti).